Here is a 1048-residue protein sequence, read N- to C-terminus: MREVEEVSKWRRRCCYFWILFPLAVIATCMTITVVTFCSSTMYMTEVMGEATKGAMDSALMHIAGNMRPLLEANRSVFTIANTLHVQGNMASFSHVGPKLFLAFSMQPLQAQISYAAVDGAAFAYYRAGGGDGEARAMFARPNGTWFTQAVDPATGRPVGNATAAAPHQQLPPNVTRLLLDGGGGGASLADGWARPGVRMLFLSAPVGGGGGAVSAAVAVDDVVLRGAAGLRQLRDLGMYYAVAGNGGATAAPPAPEPAAYRSLLGDGAAAEEMALFSSVKCTASAIDAPPKLDVHGVKSDKYRFACTNFDISGVQMGFRVVLRKSAMVGVFRRGGVTMVAVACAAAAAATVACVLMARALRRAVAREAALGADLARHRDALRQAERKSMNKSNAFASASHDIRSALAAVAGLVEVSRPEANPNIVDNLNQMELCTNKLLDILNSILDTTKVESGKVQLEEVEFNMADVLEESVDMANVVGITKGIEVIWDPCDFSVMKCDNIIGDSKRFKQILDNLLGNAMKFTQEGHVILRAWANRPIARGSIGAPSRFAYRSLENNFFSFFFGAKEDRVSQNSFNPLQNDPNSVEFYFEVVDTGIGIPKEKRESVFENYVQVKEGHGGTGLGLGIVQSFVRLMGGEISIKEKEPGERGTCFGFNVLLKTSGNQAAEEDIEEGPSTVSELDIRASVFRETNCFKGWHCILFVHGDETRRVLQAWMESIGMKVWMVPGVESISSTLEKARSSRDDCDVDRCFSSKEMVSQVLPTTLRNNNIMARNLGEHHPLGMLLIVDVSNGQLENIQRQARDFTQMRSQVPCKFVCLTDLRTSYKDFRRFEEMSCDLILRKPVHGSRLYSLLMTLRDVQSSPMHRSSLVGHENYVTRHQDSANIVALAEVGRLDQGLKTEEDRPLDGMHVLLVEDTLVLQTIQRKMLNQLGAIVELAGDGAKAVDMFRDAIERASVSEEHSVPLPYDVIFMDCQMPRMDGYEATRRIREEESRYGIRTPIIALTAHSMEDDLQKAIDVGMDLHMTKPIERRRIVEAVHGVCKGKN.

Over 1–16 (MREVEEVSKWRRRCCY) the chain is Cytoplasmic. A helical transmembrane segment spans residues 17-37 (FWILFPLAVIATCMTITVVTF). At 38-336 (CSSTMYMTEV…AMVGVFRRGG (299 aa)) the chain is on the extracellular side. Residues 337–357 (VTMVAVACAAAAAATVACVLM) form a helical membrane-spanning segment. The Cytoplasmic portion of the chain corresponds to 358–1048 (ARALRRAVAR…AVHGVCKGKN (691 aa)). Residues 398–662 (SASHDIRSAL…CFGFNVLLKT (265 aa)) form the Histidine kinase domain. Histidine 401 carries the post-translational modification Phosphohistidine; by autocatalysis. One can recognise a Response regulatory domain in the interval 912–1044 (HVLLVEDTLV…RIVEAVHGVC (133 aa)). Residue aspartate 975 is modified to 4-aspartylphosphate.

Activation probably requires a transfer of a phosphate group between a His in the transmitter domain and an Asp of the receiver domain.

The protein localises to the cell membrane. The catalysed reaction is ATP + protein L-histidine = ADP + protein N-phospho-L-histidine.. Its function is as follows. Cytokinin receptor related to bacterial two-component regulators. Functions as a histidine kinase and transmits the stress signal to a downstream MAPK cascade. This chain is Probable histidine kinase 2, found in Oryza sativa subsp. indica (Rice).